Reading from the N-terminus, the 271-residue chain is NADPH-dependent 7-cyano-7-deazaguanine reductase (271 aa).

A substrate-binding site is contributed by 81–83 (IES). Residue 83 to 84 (SK) participates in NADPH binding. Catalysis depends on Cys-177, which acts as the Thioimide intermediate. Asp-184 (proton donor) is an active-site residue. A substrate-binding site is contributed by 216 to 217 (HE). Residue 245 to 246 (RG) coordinates NADPH.

This sequence belongs to the GTP cyclohydrolase I family. QueF type 2 subfamily. In terms of assembly, homodimer.

It localises to the cytoplasm. It catalyses the reaction 7-aminomethyl-7-carbaguanine + 2 NADP(+) = 7-cyano-7-deazaguanine + 2 NADPH + 3 H(+). Its pathway is tRNA modification; tRNA-queuosine biosynthesis. Functionally, catalyzes the NADPH-dependent reduction of 7-cyano-7-deazaguanine (preQ0) to 7-aminomethyl-7-deazaguanine (preQ1). The sequence is that of NADPH-dependent 7-cyano-7-deazaguanine reductase from Xanthomonas campestris pv. campestris (strain B100).